Reading from the N-terminus, the 339-residue chain is Sperm acrosome membrane-associated protein 6 (339 aa).

An N-terminal signal peptide occupies residues 1–41; that stretch reads MTSQRSLSSPQTRRPSVMGLISLVGSIVLLFLLIFRASTWA. A CXXC motif motif is present at residues 42 to 45; the sequence is CLFC. 6 disulfides stabilise this stretch: C42–C155, C45–C158, C56–C70, C140–C163, C144–C169, and C186–C241. The Extracellular segment spans residues 42–310; it reads CLFCFTTYEE…NPQALTLGNL (269 aa). Positions 155 to 158 match the CXXC motif motif; the sequence is CSGC. The Ig-like domain maps to 166–251; that stretch reads PLDCPVQDML…VILHDQRPLA (86 aa). N258 carries N-linked (GlcNAc...) asparagine glycosylation. Residues 311–331 traverse the membrane as a helical segment; that stretch reads FLLAATAALGSASVTLLVWLF. The Cytoplasmic portion of the chain corresponds to 332–339; sequence FRWYLSGN.

This sequence belongs to the SPACA6 family. In terms of assembly, forms a complex with IZUMO1 and TMEM81 on spermatocyte cell membrane required for fertilization. As to expression, highly expressed in testis. Minor expression also detected in epididymis, seminal vesicle and ovary. Predominantly expressed in testicular germ cells during spermiogenesis. Most abundant in round spermatids and detected at lower levels in elongating spermatids.

It is found in the cytoplasmic vesicle. Its subcellular location is the secretory vesicle. The protein resides in the acrosome membrane. Its function is as follows. Sperm protein required for fusion of sperm with the egg membrane during fertilization. May regulate the expression of sperm surface protein DCST2. In Mus musculus (Mouse), this protein is Sperm acrosome membrane-associated protein 6.